The sequence spans 510 residues: Glycosyl hydrolase YngK (510 aa).

The signal sequence occupies residues 1-30 (MKVCQKSIVRFLVSLIIGTFVISVPFMANA).

It belongs to the glycosyl hydrolase-like 10 (GHL10) family.

The chain is Glycosyl hydrolase YngK (yngK) from Bacillus subtilis (strain 168).